The primary structure comprises 504 residues: Cytochrome P450 3A11 (504 aa).

Cys443 provides a ligand contact to heme.

Belongs to the cytochrome P450 family. The cofactor is heme. Highly expressed in liver.

The protein localises to the endoplasmic reticulum membrane. Its subcellular location is the microsome membrane. It carries out the reaction an organic molecule + reduced [NADPH--hemoprotein reductase] + O2 = an alcohol + oxidized [NADPH--hemoprotein reductase] + H2O + H(+). Functionally, catalyzes erythromycin N-demethylation, nifedipine oxidation and testosterone 6 beta-hydroxylation. This is Cytochrome P450 3A11 (Cyp3a11) from Mus musculus (Mouse).